A 361-amino-acid polypeptide reads, in one-letter code: 3-dehydroquinate synthase (361 aa).

NAD(+) is bound by residues 71-76 (DGEQYK), 105-109 (GVIGD), 129-130 (TT), K142, and K151. Positions 184, 247, and 264 each coordinate Zn(2+).

The protein belongs to the sugar phosphate cyclases superfamily. Dehydroquinate synthase family. Requires Co(2+) as cofactor. It depends on Zn(2+) as a cofactor. NAD(+) is required as a cofactor.

The protein localises to the cytoplasm. The catalysed reaction is 7-phospho-2-dehydro-3-deoxy-D-arabino-heptonate = 3-dehydroquinate + phosphate. It participates in metabolic intermediate biosynthesis; chorismate biosynthesis; chorismate from D-erythrose 4-phosphate and phosphoenolpyruvate: step 2/7. Functionally, catalyzes the conversion of 3-deoxy-D-arabino-heptulosonate 7-phosphate (DAHP) to dehydroquinate (DHQ). This chain is 3-dehydroquinate synthase, found in Pectobacterium atrosepticum (strain SCRI 1043 / ATCC BAA-672) (Erwinia carotovora subsp. atroseptica).